Consider the following 247-residue polypeptide: Ribosomal RNA small subunit methyltransferase J (247 aa).

S-adenosyl-L-methionine is bound by residues 101–102, 117–118, 153–154, and D171; these read RD, ER, and SS.

Belongs to the methyltransferase superfamily. RsmJ family.

It is found in the cytoplasm. It catalyses the reaction guanosine(1516) in 16S rRNA + S-adenosyl-L-methionine = N(2)-methylguanosine(1516) in 16S rRNA + S-adenosyl-L-homocysteine + H(+). Its function is as follows. Specifically methylates the guanosine in position 1516 of 16S rRNA. This is Ribosomal RNA small subunit methyltransferase J from Photorhabdus laumondii subsp. laumondii (strain DSM 15139 / CIP 105565 / TT01) (Photorhabdus luminescens subsp. laumondii).